The chain runs to 180 residues: Free methionine-R-sulfoxide reductase (180 aa).

Residues Gly-99–Cys-177 enclose the GAF domain.

The protein belongs to the free Met sulfoxide reductase family.

Its subcellular location is the cytoplasm. The protein localises to the nucleus. It carries out the reaction [thioredoxin]-disulfide + L-methionine + H2O = L-methionine (R)-S-oxide + [thioredoxin]-dithiol. Catalyzes the reversible oxidation-reduction of the R-enantiomer of free methionine sulfoxide to methionine. Does not act on S-enantiomer of free methionine sulfoxide or R-enantiomer of dabsylated methionine sulfoxide. Involved in protection against oxidative stress. The sequence is that of Free methionine-R-sulfoxide reductase from Saccharomyces cerevisiae (strain ATCC 204508 / S288c) (Baker's yeast).